We begin with the raw amino-acid sequence, 121 residues long: Large ribosomal subunit protein bL20 (121 aa).

Belongs to the bacterial ribosomal protein bL20 family.

Binds directly to 23S ribosomal RNA and is necessary for the in vitro assembly process of the 50S ribosomal subunit. It is not involved in the protein synthesizing functions of that subunit. In Petrotoga mobilis (strain DSM 10674 / SJ95), this protein is Large ribosomal subunit protein bL20.